Consider the following 859-residue polypeptide: Leucine--tRNA ligase (859 aa).

The 'HIGH' region motif lies at 42–52 (PYPSGRLHMGH). Positions 618-622 (KMSKS) match the 'KMSKS' region motif. Position 621 (K621) interacts with ATP.

Belongs to the class-I aminoacyl-tRNA synthetase family.

Its subcellular location is the cytoplasm. It catalyses the reaction tRNA(Leu) + L-leucine + ATP = L-leucyl-tRNA(Leu) + AMP + diphosphate. This Shewanella amazonensis (strain ATCC BAA-1098 / SB2B) protein is Leucine--tRNA ligase.